Consider the following 482-residue polypeptide: Glucose starvation modulator protein 1 (482 aa).

The zn(2)-C6 fungal-type DNA-binding region spans Cys20–Cys48. Residues Leu350–Ser422 enclose the PAS domain.

This sequence belongs to the ERT1/acuK family.

Its subcellular location is the nucleus. Functionally, transcription factor which regulates nonfermentable carbon utilization. The polypeptide is Glucose starvation modulator protein 1 (GSM1) (Eremothecium gossypii (strain ATCC 10895 / CBS 109.51 / FGSC 9923 / NRRL Y-1056) (Yeast)).